The sequence spans 123 residues: Large ribosomal subunit protein bL12 (123 aa).

Belongs to the bacterial ribosomal protein bL12 family. Homodimer. Part of the ribosomal stalk of the 50S ribosomal subunit. Forms a multimeric L10(L12)X complex, where L10 forms an elongated spine to which 2 to 4 L12 dimers bind in a sequential fashion. Binds GTP-bound translation factors.

Forms part of the ribosomal stalk which helps the ribosome interact with GTP-bound translation factors. Is thus essential for accurate translation. This Bartonella bacilliformis (strain ATCC 35685 / KC583 / Herrer 020/F12,63) protein is Large ribosomal subunit protein bL12.